We begin with the raw amino-acid sequence, 91 residues long: Acylphosphatase (91 aa).

Residues 3–89 enclose the Acylphosphatase-like domain; the sequence is TLLVRISGKV…PDQPGFSQKP (87 aa). Residues arginine 18 and asparagine 36 contribute to the active site.

Belongs to the acylphosphatase family.

The catalysed reaction is an acyl phosphate + H2O = a carboxylate + phosphate + H(+). The chain is Acylphosphatase (acyP) from Rhodospirillum rubrum (strain ATCC 11170 / ATH 1.1.1 / DSM 467 / LMG 4362 / NCIMB 8255 / S1).